Here is a 482-residue protein sequence, read N- to C-terminus: MMEMVLPVANATAAALARVSAVFNAPLARAVVFGIHIDGHLVVEGLLIAAILFQLSRKSYKPPKKPLTEREVDELCDDWQPEPLCPPIKEGARIDTPTLESAAGPHTTVDGKEVVNFASANYLGLIGNEKIIDSCVGSVEKYGVGSCGPRSFYGTIDVHLDCESKIANFLGTQDSILYSYGISTIFSVIPAFCKKGDIIVADEGVHWAVQNGLQLSRSTVVYFKHNDMASLASILEKLTHGNKHTEKIRRYIVVEAIYQNSGQIAPLDEIVRLKEKYRFRVILEESHSFGVLGKSGRGLAEHYGVPVEKIDIITAGMGNALATDGGFCTGSVRVVDHQRLSSSGYVFSASLPPYLASAAMSAVNHLEENPSVLANLRSNIALLHKELSDIPGLEIASNILSPIVFLKLKTPTGSAVADLELLEIIAEKVLMEDSVFIAATKRSSLDKCRLPVGIRLFVSAGHTESDIFKVSASLKRVAASVV.

The chain crosses the membrane as a helical span at residues 33 to 53 (FGIHIDGHLVVEGLLIAAILF).

Belongs to the class-II pyridoxal-phosphate-dependent aminotransferase family. As to quaternary structure, heterodimer with LCB2. Component of the serine palmitoyltransferase (SPT) complex, composed of LCB1 and LCB2. Pyridoxal 5'-phosphate is required as a cofactor.

The protein resides in the endoplasmic reticulum membrane. It carries out the reaction L-serine + hexadecanoyl-CoA + H(+) = 3-oxosphinganine + CO2 + CoA. Its pathway is lipid metabolism; sphingolipid metabolism. Its function is as follows. Serine palmitoyltransferase (SPT). The heterodimer formed with LCB2 constitutes the catalytic core. This is Long chain base biosynthesis protein 1c from Oryza sativa subsp. japonica (Rice).